The following is a 259-amino-acid chain: UPF0246 protein PputGB1_4560 (259 aa).

This sequence belongs to the UPF0246 family.

This Pseudomonas putida (strain GB-1) protein is UPF0246 protein PputGB1_4560.